An 85-amino-acid chain; its full sequence is UPF0297 protein LBA0418 (85 aa).

The protein belongs to the UPF0297 family.

This Lactobacillus acidophilus (strain ATCC 700396 / NCK56 / N2 / NCFM) protein is UPF0297 protein LBA0418.